We begin with the raw amino-acid sequence, 340 residues long: Glycerol-3-phosphate dehydrogenase [NAD(P)+] (340 aa).

S11, W12, R33, and K106 together coordinate NADPH. The sn-glycerol 3-phosphate site is built by K106, G137, and S139. A141 serves as a coordination point for NADPH. K192, D245, S255, R256, and N257 together coordinate sn-glycerol 3-phosphate. The active-site Proton acceptor is the K192. R256 is an NADPH binding site. The NADPH site is built by V280 and E282.

Belongs to the NAD-dependent glycerol-3-phosphate dehydrogenase family.

It is found in the cytoplasm. The enzyme catalyses sn-glycerol 3-phosphate + NAD(+) = dihydroxyacetone phosphate + NADH + H(+). The catalysed reaction is sn-glycerol 3-phosphate + NADP(+) = dihydroxyacetone phosphate + NADPH + H(+). It participates in membrane lipid metabolism; glycerophospholipid metabolism. In terms of biological role, catalyzes the reduction of the glycolytic intermediate dihydroxyacetone phosphate (DHAP) to sn-glycerol 3-phosphate (G3P), the key precursor for phospholipid synthesis. The polypeptide is Glycerol-3-phosphate dehydrogenase [NAD(P)+] (Bacillus cereus (strain 03BB102)).